An 897-amino-acid polypeptide reads, in one-letter code: MNISGSSCGSPNSADTSSDFKDLWTKLKECHDREVQGLQVKVTKLKQERILDAQRLEEFFTKNQQLREQQKVLHETIKVLEDRLRAGLCDRCAVTEEHMRKKQQEFENIRQQNLKLITELMNERNTLQEENKKLSEQLQQKIENDQQHQAAELECEEDVIPDSPITAFSFSGVNRLRRKENPHVRYIEQTHTKLEHSVCANEMRKVSKSSTHPQHNPNENEILVADTYDQSQSPMAKAHGTSSYTPDKSSFNLATVVAETLGLGVQEESETQGPMSPLGDELYHCLEGNHKKQPFEESTRNTEDSLRFSDSTSKTPPQEELPTRVSSPVFGATSSIKSGLDLNTSLSPSLLQPGKKKHLKTLPFSNTCISRLEKTRSKSEDSALFTHHSLGSEVNKIIIQSSNKQILINKNISESLGEQNRTEYGKDSNTDKHLEPLKSLGGRTSKRKKTEEESEHEVSCPQASFDKENAFPFPMDNQFSMNGDCVMDKPLDLSDRFSAIQRQEKSQGSETSKNKFRQVTLYEALKTIPKGFSSSRKASDGNCTLPKDSPGEPCSQECIILQPLNKCSPDNKPSLQIKEENAVFKIPLRPRESLETENVLDDIKSAGSHEPIKIQTRSDHGGCELASVLQLNPCRTGKIKSLQNNQDVSFENIQWSIDPGADLSQYKMDVTVIDTKDGSQSKLGGETVDMDCTLVSETVLLKMKKQEQKGEKSSNEERKMNDSLEDMFDRTTHEEYESCLADSFSQAADEEEELSTATKKLHTHGDKQDKVKQKAFVEPYFKGDERETSLQNFPHIEVVRKKEERRKLLGHTCKECEIYYADMPAEEREKKLASCSRHRFRYIPPNTPENFWEVGFPSTQTCMERGYIKEDLDPCPRPKRRQPYNAIFSPKGKEQKT.

An essential for binding to the MRN complex and for RPA focus formation on DNA damage region spans residues 22 to 45 (DLWTKLKECHDREVQGLQVKVTKL). Positions 35–84 (VQGLQVKVTKLKQERILDAQRLEEFFTKNQQLREQQKVLHETIKVLEDRL) form a coiled coil. The segment at 45 to 160 (LKQERILDAQ…AELECEEDVI (116 aa)) is required for interaction with LMO4, probably by stabilizing the interaction through RPPB8 dimerization. Glycyl lysine isopeptide (Lys-Gly) (interchain with G-Cter in SUMO2) cross-links involve residues K62 and K115. A coiled-coil region spans residues 117 to 138 (ITELMNERNTLQEENKKLSEQL). K193 participates in a covalent cross-link: Glycyl lysine isopeptide (Lys-Gly) (interchain with G-Cter in SUMO2). A phosphoserine mark is found at S233 and S276. Over residues 292 to 307 (KQPFEESTRNTEDSLR) the composition is skewed to basic and acidic residues. The tract at residues 292-325 (KQPFEESTRNTEDSLRFSDSTSKTPPQEELPTRV) is disordered. T315 is modified (phosphothreonine; by CDK2). S326, S327, and S349 each carry phosphoserine. Residues K360 and K378 each participate in a glycyl lysine isopeptide (Lys-Gly) (interchain with G-Cter in SUMO2) cross-link. S379 is subject to Phosphoserine. Residues K396, K404, and K410 each participate in a glycyl lysine isopeptide (Lys-Gly) (interchain with G-Cter in SUMO2) cross-link. The segment at 419–464 (QNRTEYGKDSNTDKHLEPLKSLGGRTSKRKKTEEESEHEVSCPQAS) is disordered. Residues 420–436 (NRTEYGKDSNTDKHLEP) show a composition bias toward basic and acidic residues. Glycyl lysine isopeptide (Lys-Gly) (interchain with G-Cter in SUMO2) cross-links involve residues K438 and K449. The short motif at 490 to 494 (PLDLS) is the PXDLS motif element. Residues 509 to 557 (SETSKNKFRQVTLYEALKTIPKGFSSSRKASDGNCTLPKDSPGEPCSQE) form a damage-recruitment motif region. K526 is covalently cross-linked (Glycyl lysine isopeptide (Lys-Gly) (interchain with G-Cter in SUMO2); alternate). Glycyl lysine isopeptide (Lys-Gly) (interchain with G-Cter in SUMO2) cross-links involve residues K530, K572, and K578. Residue K604 forms a Glycyl lysine isopeptide (Lys-Gly) (interchain with G-Cter in SUMO2); alternate linkage. Glycyl lysine isopeptide (Lys-Gly) (interchain with G-Cter in SUMO2) cross-links involve residues K613, K638, and K640. The interval 641–685 (SLQNNQDVSFENIQWSIDPGADLSQYKMDVTVIDTKDGSQSKLGG) is required for interaction with LMO4, probably by making physical contact with LMO4. The residue at position 664 (S664) is a Phosphoserine; by ATM. K676 is covalently cross-linked (Glycyl lysine isopeptide (Lys-Gly) (interchain with G-Cter in SUMO2)). A Phosphoserine modification is found at S679. The disordered stretch occupies residues 704-723 (KKQEQKGEKSSNEERKMNDS). K719 is covalently cross-linked (Glycyl lysine isopeptide (Lys-Gly) (interchain with G-Cter in SUMO2)). S723 bears the Phosphoserine mark. S745 carries the post-translational modification Phosphoserine; by ATM. Residue K782 forms a Glycyl lysine isopeptide (Lys-Gly) (interchain with G-Cter in SUMO2) linkage. A KLHL15-binding motif is present at residues 840 to 842 (FRY). At T847 the chain carries Phosphothreonine; by CDK1. T859 bears the Phosphothreonine; by ATR mark. Residue K869 forms a Glycyl lysine isopeptide (Lys-Gly) (interchain with G-Cter in SUMO2) linkage. A disordered region spans residues 873 to 897 (DPCPRPKRRQPYNAIFSPKGKEQKT).

It belongs to the COM1/SAE2/CtIP family. Homotetramer; formed by antiparallel association of helical extensions protruding from the N-termini of two parallel coiled-coil dimers. Forms a dumbbell-shaped particle in which polar globular domains are held about 30 nm apart by a central rod. Homotetramerization is required for DNA-end resection and repair. Interacts (via the PXDLS motif) with CTBP1; the interaction is disrupted via binding of the adenovirus E1A to CTBP1. Component of the BRCA1-RBBP8 complex. Interacts (the Ser-327 phosphorylated form) with BRCA1 (via the C-terminal BRCT domains): the interaction occurs in the G2 phase, ubiquitinates RBBP8 and involves RBBP8 in BRCA1-dependent G2/M checkpoint control on DNA damage. Interacts with RB1. Interacts with the MRN complex; interacts directly with MRE11; the interaction is required for efficient homologous recombination (HR) and regulation of the MRN complex. Interacts directly with RAD50. Interacts (when phosphorylated by CDK1) with NBN; promoting association with the MRN complex. Interacts with LM04 (via the LIM zinc-binding 1 domain). Interacts with SIAH1. Interacts with RNF138. Interacts with EXD2. Interacts with CUL3 and KLHL15; this interaction leads to RBBP8 proteasomal degradation. Directly interacts with PIN1; this interaction depends upon RBBP8 phosphorylation, predominantly at Thr-315. Interacts with FZR1; this interaction leads to APC/C-mediated RBBP8 proteasomal degradation. Interacts with AUNIP; leading to recruitment of RBBP8 to sites of DNA damage. Interacts with SAMHD1. Interacts with HDGFL2. In terms of processing, hyperphosphorylation upon ionizing radiation results in dissociation from BRCA1. Phosphorylation at Thr-847 by CDK1 is essential for the recruitment to DNA and the DNA repair function. Phosphorylation at Thr-847 and Thr-859 promote interaction with NBN and recruitment to double-strand breaks (DSBs). Phosphorylated on Ser-327 as cells enter G2 phase. This phosphorylation is required for binding BRCA1 and for the G2/M DNA damage transition checkpoint control. Phosphorylation at Thr-315, probably catalyzed by CDK2, is required for PIN1-binding, while phosphorylation at Ser-276 serves as a PIN1 isomerization site. Phosphorylation at Thr-315 is cell-cycle dependent. It steadily increases during S phase, peaks at late S/G2 phase, and drops at G1. Phosphorylation is not required for tetramerization. Binds to DNA more strongly when dephosphorylated. Post-translationally, ubiquitinated. Ubiquitination at multiple sites by BRCA1 (via its N-terminal RING domain) does not lead to its proteasomal degradation but instead the ubiquitinated RBBP8 binds to chromatin following DNA damage and may play a role in G2/M checkpoint control. Ubiquitinated by RNF138 at its N-terminus. Ubiquitinated through 'Lys-48' by the E3 CUL3-KLHL15 complex; this modification leads to proteasomal degradation. Ubiquitinated by the E3 FZR1/APC/C complex; this modification leads to proteasomal degradation. In terms of tissue distribution, expressed in ER-positive breast cancer lines, but tends to be down-regulated ER-negative cells (at protein level).

The protein localises to the nucleus. The protein resides in the chromosome. Endonuclease that cooperates with the MRE11-RAD50-NBN (MRN) complex in DNA-end resection, the first step of double-strand break (DSB) repair through the homologous recombination (HR) pathway. HR is restricted to S and G2 phases of the cell cycle and preferentially repairs DSBs resulting from replication fork collapse. Key determinant of DSB repair pathway choice, as it commits cells to HR by preventing classical non-homologous end-joining (NHEJ). Specifically promotes the endonuclease activity of the MRN complex to clear DNA ends containing protein adducts: recruited to DSBs by NBN following phosphorylation by CDK1, and promotes the endonuclease activity of MRE11 to clear protein-DNA adducts and generate clean double-strand break ends. Functions downstream of the MRN complex and ATM, promotes ATR activation and its recruitment to DSBs in the S/G2 phase facilitating the generation of ssDNA. Component of the BRCA1-RBBP8 complex that regulates CHEK1 activation and controls cell cycle G2/M checkpoints on DNA damage. During immunoglobulin heavy chain class-switch recombination, promotes microhomology-mediated alternative end joining (A-NHEJ) and plays an essential role in chromosomal translocations. Binds preferentially to DNA Y-junctions and to DNA substrates with blocked ends and promotes intermolecular DNA bridging. This Homo sapiens (Human) protein is DNA endonuclease RBBP8 (RBBP8).